The chain runs to 360 residues: Cyclin-Y-like protein 2 (360 aa).

Positions 204-286 (RLTAEFAIVS…FLKLINYNIG (83 aa)) constitute a Cyclin N-terminal domain.

It belongs to the cyclin family. Cyclin Y subfamily.

This chain is Cyclin-Y-like protein 2 (CCNYL2), found in Macaca fascicularis (Crab-eating macaque).